Consider the following 239-residue polypeptide: Adapter protein MecA (239 aa).

Residues 118 to 128 are compositionally biased toward basic and acidic residues; the sequence is EQRTKEKEAQG. The tract at residues 118–137 is disordered; it reads EQRTKEKEAQGSKRQKSSAR.

Belongs to the MecA family. As to quaternary structure, homodimer.

Its function is as follows. Enables the recognition and targeting of unfolded and aggregated proteins to the ClpC protease or to other proteins involved in proteolysis. The polypeptide is Adapter protein MecA (Staphylococcus aureus (strain Mu3 / ATCC 700698)).